Consider the following 418-residue polypeptide: Light-independent protochlorophyllide reductase subunit N (418 aa).

Residues C17, C42, and C103 each coordinate [4Fe-4S] cluster.

The protein belongs to the BchN/ChlN family. In terms of assembly, protochlorophyllide reductase is composed of three subunits; ChlL, ChlN and ChlB. Forms a heterotetramer of two ChlB and two ChlN subunits. It depends on [4Fe-4S] cluster as a cofactor.

It carries out the reaction chlorophyllide a + oxidized 2[4Fe-4S]-[ferredoxin] + 2 ADP + 2 phosphate = protochlorophyllide a + reduced 2[4Fe-4S]-[ferredoxin] + 2 ATP + 2 H2O. The protein operates within porphyrin-containing compound metabolism; chlorophyll biosynthesis (light-independent). In terms of biological role, component of the dark-operative protochlorophyllide reductase (DPOR) that uses Mg-ATP and reduced ferredoxin to reduce ring D of protochlorophyllide (Pchlide) to form chlorophyllide a (Chlide). This reaction is light-independent. The NB-protein (ChlN-ChlB) is the catalytic component of the complex. The chain is Light-independent protochlorophyllide reductase subunit N from Prochlorococcus marinus (strain MIT 9303).